Reading from the N-terminus, the 862-residue chain is MNLAIPNPNSHHLSFLIQNSSFIGNRRFADGNRLRFLSGGNRKPCSFSGKIKAKTKDLVLGNPSVSVEKGKYSYDVESLINKLSSLPPRGSIARCLDIFKNKLSLNDFALVFKEFAGRGDWQRSLRLFKYMQRQIWCKPNEHIYTIMISLLGREGLLDKCLEVFDEMPSQGVSRSVFSYTALINAYGRNGRYETSLELLDRMKNEKISPSILTYNTVINACARGGLDWEGLLGLFAEMRHEGIQPDIVTYNTLLSACAIRGLGDEAEMVFRTMNDGGIVPDLTTYSHLVETFGKLRRLEKVCDLLGEMASGGSLPDITSYNVLLEAYAKSGSIKEAMGVFHQMQAAGCTPNANTYSVLLNLFGQSGRYDDVRQLFLEMKSSNTDPDAATYNILIEVFGEGGYFKEVVTLFHDMVEENIEPDMETYEGIIFACGKGGLHEDARKILQYMTANDIVPSSKAYTGVIEAFGQAALYEEALVAFNTMHEVGSNPSIETFHSLLYSFARGGLVKESEAILSRLVDSGIPRNRDTFNAQIEAYKQGGKFEEAVKTYVDMEKSRCDPDERTLEAVLSVYSFARLVDECREQFEEMKASDILPSIMCYCMMLAVYGKTERWDDVNELLEEMLSNRVSNIHQVIGQMIKGDYDDDSNWQIVEYVLDKLNSEGCGLGIRFYNALLDALWWLGQKERAARVLNEATKRGLFPELFRKNKLVWSVDVHRMSEGGMYTALSVWLNDINDMLLKGDLPQLAVVVSVRGQLEKSSAARESPIAKAAFSFLQDHVSSSFSFTGWNGGRIMCQRSQLKQLLSTKEPTSEESENKNLVALANSPIFAAGTRASTSSDTNHSGNPTQRRTRTKKELAGSTA.

A chloroplast-targeting transit peptide spans 1–66 (MNLAIPNPNS…DLVLGNPSVS (66 aa)). 15 PPR repeats span residues 104–139 (SLNDFALVFKEFAGRGDWQRSLRLFKYMQRQIWCKP), 140–174 (NEHIYTIMISLLGREGLLDKCLEVFDEMPSQGVSR), 175–209 (SVFSYTALINAYGRNGRYETSLELLDRMKNEKISP), 210–245 (SILTYNTVINACARGGLDWEGLLGLFAEMRHEGIQP), 246–280 (DIVTYNTLLSACAIRGLGDEAEMVFRTMNDGGIVP), 281–315 (DLTTYSHLVETFGKLRRLEKVCDLLGEMASGGSLP), 316–350 (DITSYNVLLEAYAKSGSIKEAMGVFHQMQAAGCTP), 351–385 (NANTYSVLLNLFGQSGRYDDVRQLFLEMKSSNTDP), 386–420 (DAATYNILIEVFGEGGYFKEVVTLFHDMVEENIEP), 421–455 (DMETYEGIIFACGKGGLHEDARKILQYMTANDIVP), 456–490 (SSKAYTGVIEAFGQAALYEEALVAFNTMHEVGSNP), 491–525 (SIETFHSLLYSFARGGLVKESEAILSRLVDSGIPR), 526–560 (NRDTFNAQIEAYKQGGKFEEAVKTYVDMEKSRCDP), 561–595 (DERTLEAVLSVYSFARLVDECREQFEEMKASDILP), and 596–630 (SIMCYCMMLAVYGKTERWDDVNELLEEMLSNRVSN). The 89-residue stretch at 713–801 (VDVHRMSEGG…RIMCQRSQLK (89 aa)) folds into the Smr domain. Residues 831–862 (GTRASTSSDTNHSGNPTQRRTRTKKELAGSTA) are disordered. The span at 833-848 (RASTSSDTNHSGNPTQ) shows a compositional bias: polar residues.

The protein belongs to the PPR family. P subfamily. In terms of tissue distribution, mostly expressed in leaves, stems and flowers, but barely in roots.

The protein localises to the plastid. The protein resides in the chloroplast. In terms of biological role, involved in plastid gene expression. This Arabidopsis thaliana (Mouse-ear cress) protein is Pentatricopeptide repeat-containing protein At1g74850, chloroplastic (PTAC2).